A 98-amino-acid polypeptide reads, in one-letter code: NADH-ubiquinone oxidoreductase chain 4L (98 aa).

A run of 3 helical transmembrane segments spans residues 1–21 (MSMV…GLLI), 29–49 (SLLC…VTIL), and 61–81 (IILL…LVMV).

The protein belongs to the complex I subunit 4L family. In terms of assembly, core subunit of respiratory chain NADH dehydrogenase (Complex I) which is composed of 45 different subunits.

Its subcellular location is the mitochondrion inner membrane. It carries out the reaction a ubiquinone + NADH + 5 H(+)(in) = a ubiquinol + NAD(+) + 4 H(+)(out). Functionally, core subunit of the mitochondrial membrane respiratory chain NADH dehydrogenase (Complex I) which catalyzes electron transfer from NADH through the respiratory chain, using ubiquinone as an electron acceptor. Part of the enzyme membrane arm which is embedded in the lipid bilayer and involved in proton translocation. This Taxidea taxus (American badger) protein is NADH-ubiquinone oxidoreductase chain 4L (MT-ND4L).